Consider the following 601-residue polypeptide: Probable Xaa-Pro aminopeptidase P (601 aa).

Mn(2+) is bound by residues D398, D409, E507, and E521.

The protein belongs to the peptidase M24B family. Mn(2+) is required as a cofactor.

It carries out the reaction Release of any N-terminal amino acid, including proline, that is linked to proline, even from a dipeptide or tripeptide.. Functionally, catalyzes the removal of a penultimate prolyl residue from the N-termini of peptides. This Sclerotinia sclerotiorum (strain ATCC 18683 / 1980 / Ss-1) (White mold) protein is Probable Xaa-Pro aminopeptidase P (ampp).